Consider the following 259-residue polypeptide: Thiazole synthase (259 aa).

The active-site Schiff-base intermediate with DXP is lysine 102. 1-deoxy-D-xylulose 5-phosphate contacts are provided by residues glycine 163, 189 to 190 (AG), and 211 to 212 (NT).

It belongs to the ThiG family. In terms of assembly, homotetramer. Forms heterodimers with either ThiH or ThiS.

The protein resides in the cytoplasm. It carries out the reaction [ThiS sulfur-carrier protein]-C-terminal-Gly-aminoethanethioate + 2-iminoacetate + 1-deoxy-D-xylulose 5-phosphate = [ThiS sulfur-carrier protein]-C-terminal Gly-Gly + 2-[(2R,5Z)-2-carboxy-4-methylthiazol-5(2H)-ylidene]ethyl phosphate + 2 H2O + H(+). It participates in cofactor biosynthesis; thiamine diphosphate biosynthesis. Catalyzes the rearrangement of 1-deoxy-D-xylulose 5-phosphate (DXP) to produce the thiazole phosphate moiety of thiamine. Sulfur is provided by the thiocarboxylate moiety of the carrier protein ThiS. In vitro, sulfur can be provided by H(2)S. The sequence is that of Thiazole synthase from Novosphingobium aromaticivorans (strain ATCC 700278 / DSM 12444 / CCUG 56034 / CIP 105152 / NBRC 16084 / F199).